Reading from the N-terminus, the 89-residue chain is MFPKRQGIIVWLHSLKYGKQLRKFGNIHYISKRLKYAVLYCDMEQVDHVMKKLASLPFVKRVEPSYRPFLKLEFESKGEKEKDSPYPLG.

This sequence belongs to the UPF0298 family.

The protein resides in the cytoplasm. This is UPF0298 protein GK1096 from Geobacillus kaustophilus (strain HTA426).